The following is a 352-amino-acid chain: Protein Wnt-3a (352 aa).

The first 18 residues, 1-18 (MASFGYFLFLCGLSQALS), serve as a signal peptide directing secretion. A disulfide bond links cysteine 77 and cysteine 88. N-linked (GlcNAc...) asparagine glycosylation is found at asparagine 87 and asparagine 92. 10 disulfides stabilise this stretch: cysteine 128–cysteine 136, cysteine 138–cysteine 155, cysteine 203–cysteine 217, cysteine 205–cysteine 212, cysteine 281–cysteine 312, cysteine 297–cysteine 307, cysteine 311–cysteine 351, cysteine 327–cysteine 342, cysteine 329–cysteine 339, and cysteine 334–cysteine 335. Residue serine 209 is the site of O-palmitoleoyl serine; by PORCN attachment. Asparagine 298 is a glycosylation site (N-linked (GlcNAc...) asparagine).

It belongs to the Wnt family. Palmitoleoylation is required for efficient binding to frizzled receptors. Depalmitoleoylation leads to inhibit the Wnt signaling pathway. In terms of processing, disulfide bonds have critical and distinct roles in secretion and activity. Loss of each conserved cysteine in WNT3A results in high molecular weight oxidized Wnt oligomers, which are formed through inter-Wnt disulfide bonding. As to expression, expressed in cornea. Isoform 1 is expressed in the primitive streak, dorsal neural tube, proximal otic vesicle, the apical ectodermal ridge and the epithelium of feather buds.

The protein resides in the secreted. It is found in the extracellular space. The protein localises to the extracellular matrix. Its subcellular location is the cytoplasm. Its function is as follows. Ligand for members of the frizzled family of seven transmembrane receptors. Functions in the canonical Wnt signaling pathway that results in activation of transcription factors of the TCF/LEF family. Regulates chick apical ectodermal ridge formation. Required for normal embryonic mesoderm development and formation of caudal somites. Required for normal morphogenesis of the developing neural tube. In Gallus gallus (Chicken), this protein is Protein Wnt-3a (WNT3A).